A 387-amino-acid chain; its full sequence is Acetylornithine deacetylase (387 aa).

Zn(2+) is bound at residue histidine 80. The active site involves aspartate 82. Aspartate 112 provides a ligand contact to Zn(2+). Glutamate 144 is a catalytic residue. Zn(2+) is bound by residues glutamate 145, glutamate 169, and histidine 355.

The protein belongs to the peptidase M20A family. ArgE subfamily. In terms of assembly, homodimer. Zn(2+) serves as cofactor. The cofactor is Co(2+). It depends on glutathione as a cofactor.

It localises to the cytoplasm. It carries out the reaction N(2)-acetyl-L-ornithine + H2O = L-ornithine + acetate. It functions in the pathway amino-acid biosynthesis; L-arginine biosynthesis; L-ornithine from N(2)-acetyl-L-ornithine (linear): step 1/1. Its function is as follows. Catalyzes the hydrolysis of the amide bond of N(2)-acetylated L-amino acids. Cleaves the acetyl group from N-acetyl-L-ornithine to form L-ornithine, an intermediate in L-arginine biosynthesis pathway, and a branchpoint in the synthesis of polyamines. This Proteus mirabilis (strain HI4320) protein is Acetylornithine deacetylase.